Consider the following 189-residue polypeptide: DnaJ homolog subfamily C member 5G (189 aa).

The region spanning 17–98 (SLYAVLDLKK…KKRKIYDQHG (82 aa)) is the J domain. The tract at residues 154–189 (PEQDSGRKYQQNVQSQPPRSGAKCDFRSEENSEDDF) is disordered. Residues 161 to 171 (KYQQNVQSQPP) show a composition bias toward polar residues.

Palmitoylated. As to expression, testis specific.

The protein localises to the membrane. In Homo sapiens (Human), this protein is DnaJ homolog subfamily C member 5G (DNAJC5G).